Reading from the N-terminus, the 193-residue chain is Thymidine kinase (193 aa).

Residues 14 to 21 (GCMFSGKT) and 87 to 90 (DELH) each bind ATP. The active-site Proton acceptor is the glutamate 88. Residues cysteine 147, cysteine 150, cysteine 185, and cysteine 188 each coordinate Zn(2+).

The protein belongs to the thymidine kinase family. As to quaternary structure, homotetramer.

It is found in the cytoplasm. It catalyses the reaction thymidine + ATP = dTMP + ADP + H(+). The polypeptide is Thymidine kinase (Roseiflexus sp. (strain RS-1)).